The primary structure comprises 216 residues: MMVSLKSSLFFMLALLTVVHALNFDIPAKTNPEPFCLREYVGEKNLVIVNLKTTGNMGDGQTLSMMITDSSGNTHSSIQNVLGEKSVAFDVDASAMLDICFLNTLTPGAIESEHKKRSVKLEFTVGADADDYSSLQKANNLEPVEADIRRARDFIEEIKGKIYYLQAREARFRNTNESTNERVKNFAYLTFISLFVLVIWQILYLRSFFQRKHLIP.

The first 21 residues, 1 to 21, serve as a signal peptide directing secretion; the sequence is MMVSLKSSLFFMLALLTVVHA. Residues 22–184 are Lumenal-facing; sequence LNFDIPAKTN…TNESTNERVK (163 aa). A GOLD domain is found at 34–150; sequence PFCLREYVGE…LEPVEADIRR (117 aa). The chain crosses the membrane as a helical span at residues 185 to 205; the sequence is NFAYLTFISLFVLVIWQILYL. Residues 206–216 lie on the Cytoplasmic side of the membrane; it reads RSFFQRKHLIP.

It belongs to the EMP24/GP25L family.

The protein resides in the endoplasmic reticulum membrane. The protein localises to the golgi apparatus membrane. Functionally, constituent of COPII-coated endoplasmic reticulum-derived transport vesicles. Required for efficient transport of a subset of secretory proteins to the Golgi. Facilitates retrograde transport from the Golgi to the endoplasmic reticulum. This chain is Endoplasmic reticulum vesicle protein 25 (erv25), found in Schizosaccharomyces pombe (strain 972 / ATCC 24843) (Fission yeast).